Reading from the N-terminus, the 66-residue chain is UPF0337 protein bsl1473 (66 aa).

Belongs to the UPF0337 (CsbD) family.

This chain is UPF0337 protein bsl1473, found in Bradyrhizobium diazoefficiens (strain JCM 10833 / BCRC 13528 / IAM 13628 / NBRC 14792 / USDA 110).